Reading from the N-terminus, the 192-residue chain is Ion-translocating oxidoreductase complex subunit B (192 aa).

A hydrophobic region spans residues 1–26 (MNAIWIAVAAVSLLGLAFGAILGYAS). The 4Fe-4S domain maps to 32–91 (EDDPVVEKIDEILPQSQCGQCGYPGCRPYAETISCNGEKINRCAPGGEAVMLKIAELLNV). [4Fe-4S] cluster-binding residues include Cys49, Cys52, Cys57, Cys74, Cys117, Cys120, Cys123, Cys127, Cys147, Cys150, Cys153, and Cys157. 4Fe-4S ferredoxin-type domains follow at residues 108–137 (MVAVIDENNCIGCTKCIQACPVDAIVGATR) and 138–167 (AMHTVMSDLCTGCNLCVDPCPTHCISLQPV).

This sequence belongs to the 4Fe4S bacterial-type ferredoxin family. RnfB subfamily. In terms of assembly, the complex is composed of six subunits: RsxA, RsxB, RsxC, RsxD, RsxE and RsxG. It depends on [4Fe-4S] cluster as a cofactor.

The protein localises to the cell inner membrane. In terms of biological role, part of a membrane-bound complex that couples electron transfer with translocation of ions across the membrane. Required to maintain the reduced state of SoxR. The chain is Ion-translocating oxidoreductase complex subunit B from Escherichia coli O6:K15:H31 (strain 536 / UPEC).